Consider the following 338-residue polypeptide: MATESILITTLPMDLNSQINNVTFGLNENETLCENWREIHHLVFHLANTCFAAGLVIPSTLNLHMILLRGMLCLGCIFFIIWAILFRCALDIMIWNATFLSMNFMHFIYLVYKKRPIKIEKDLKGIYHRMFEPLHVSPELFNRLTGQFCEIKTLAKGQTYAIEDKTSVDDRLSILLKGIMKVSYRGHFLHAISPNAYIDSPEFRSTEMNRGETFQVTITADDNCVFLCWSRERLTYFLESEPFLYEIFKYLIGKDITTKLYSLNDPTLGKKKKLDTQPSLCSQLSVMEMRNSLASTSDNEDGLQTFLRGTSTTSSQRNNQQEFCNAYGVGPLSHAVFC.

Topologically, residues 1 to 40 (MATESILITTLPMDLNSQINNVTFGLNENETLCENWREIH) are extracellular. N21 and N29 each carry an N-linked (GlcNAc...) asparagine glycan. The chain crosses the membrane as a helical span at residues 41–61 (HLVFHLANTCFAAGLVIPSTL). Residues 62-65 (NLHM) lie on the Cytoplasmic side of the membrane. A helical membrane pass occupies residues 66–86 (ILLRGMLCLGCIFFIIWAILF). At 87–91 (RCALD) the chain is on the extracellular side. The helical transmembrane segment at 92–112 (IMIWNATFLSMNFMHFIYLVY) threads the bilayer. Residues 113 to 338 (KKRPIKIEKD…VGPLSHAVFC (226 aa)) are Cytoplasmic-facing.

This sequence belongs to the popeye family.

The protein localises to the lateral cell membrane. The protein resides in the cell junction. It is found in the tight junction. It localises to the membrane. Its subcellular location is the cell membrane. The protein localises to the sarcolemma. The protein resides in the caveola. Functionally, cell adhesion molecule involved in the establishment and/or maintenance of cell integrity. May play a role in vamp3-mediated vesicular transport and recycling of different receptor molecules. May be involved in the formation and regulation of the tight junction (TJ) paracellular permeability barrier in epithelial cells. May induce primordial adhesive contact and aggregation of epithelial cells in a Ca(2+)-independent manner. May be involved in epithelial movement during corneal sheet formation and regeneration. May play a role in the regulation of cell shape and movement by modulating the Rho-GTPase activity. May be involved in skeletal muscle and heart development as well as in the maintenance of heart function. May also be involved in striated muscle regeneration and in the regulation of cell spreading. In Xenopus tropicalis (Western clawed frog), this protein is Popeye domain-containing protein 1 (popdc1).